The primary structure comprises 87 residues: uncharacterized protein (87 aa).

Positions 1–19 are cleaved as a signal peptide; sequence MLVLLVAVLVTAVYAFVHA. A helical membrane pass occupies residues 39–59; that stretch reads LVILGAAVALASILYPVLGVL.

It to M.leprae ML2453.

It is found in the membrane. This is an uncharacterized protein from Mycobacterium bovis (strain ATCC BAA-935 / AF2122/97).